A 235-amino-acid chain; its full sequence is Orotidine 5'-phosphate decarboxylase (235 aa).

Residues Asp12, Lys34, Asp61–Thr70, Thr116, Arg177, Gln186, and Arg207 contribute to the substrate site. The active-site Proton donor is the Lys63.

Belongs to the OMP decarboxylase family. Type 1 subfamily. In terms of assembly, homodimer.

The catalysed reaction is orotidine 5'-phosphate + H(+) = UMP + CO2. The protein operates within pyrimidine metabolism; UMP biosynthesis via de novo pathway; UMP from orotate: step 2/2. In terms of biological role, catalyzes the decarboxylation of orotidine 5'-monophosphate (OMP) to uridine 5'-monophosphate (UMP). The protein is Orotidine 5'-phosphate decarboxylase of Agrobacterium fabrum (strain C58 / ATCC 33970) (Agrobacterium tumefaciens (strain C58)).